A 956-amino-acid chain; its full sequence is Translation initiation factor IF-2 (956 aa).

Positions 68-357 (APEAAAPKAP…GVSVPRGDGN (290 aa)) are disordered. Low complexity-rich tracts occupy residues 86–123 (AKPA…APAV), 141–156 (PGNN…PRAG), 164–175 (PAAAPASGAGRP), and 212–235 (GPRP…RPAA). Composition is skewed to gly residues over residues 236–257 (GSGG…GGGN) and 276–324 (RGAG…GAGR). Residues 325–334 (GKQRKSKRAK) show a composition bias toward basic residues. Positions 449–620 (ARPPVVTVMG…AVMLTADAAL (172 aa)) constitute a tr-type G domain. Residues 458 to 465 (GHVDHGKT) form a G1 region. Residue 458–465 (GHVDHGKT) participates in GTP binding. Residues 483 to 487 (GITQH) form a G2 region. The segment at 508–511 (DTPG) is G3. GTP is bound by residues 508–512 (DTPGH) and 562–565 (NKID). The G4 stretch occupies residues 562-565 (NKID). Residues 598-600 (SAR) are G5.

It belongs to the TRAFAC class translation factor GTPase superfamily. Classic translation factor GTPase family. IF-2 subfamily.

It is found in the cytoplasm. In terms of biological role, one of the essential components for the initiation of protein synthesis. Protects formylmethionyl-tRNA from spontaneous hydrolysis and promotes its binding to the 30S ribosomal subunits. Also involved in the hydrolysis of GTP during the formation of the 70S ribosomal complex. The sequence is that of Translation initiation factor IF-2 from Renibacterium salmoninarum (strain ATCC 33209 / DSM 20767 / JCM 11484 / NBRC 15589 / NCIMB 2235).